The chain runs to 1278 residues: Mediator of RNA polymerase II transcription subunit 16 (1278 aa).

Acidic residues predominate over residues 1-10 (MNQQNPEEEV). 3 disordered regions span residues 1–21 (MNQQNPEEEVSLVNNSGGGGI), 530–557 (TKDFKNHQVAAAGPSVDAPKEPDSGDEK), and 839–861 (SAGTGSNRNNVTSPTQNASSPAT). Residues 547–557 (APKEPDSGDEK) are compositionally biased toward basic and acidic residues. Residues 841-861 (GTGSNRNNVTSPTQNASSPAT) show a composition bias toward polar residues.

This sequence belongs to the plant Mediator complex subunit 16 family. Component of the Mediator complex.

The protein localises to the nucleus. Its function is as follows. Component of the Mediator complex, a coactivator involved in the regulated transcription of nearly all RNA polymerase II-dependent genes. Mediator functions as a bridge to convey information from gene-specific regulatory proteins to the basal RNA polymerase II transcription machinery. The Mediator complex, having a compact conformation in its free form, is recruited to promoters by direct interactions with regulatory proteins and serves for the assembly of a functional preinitiation complex with RNA polymerase II and the general transcription factors. Involved in the regulation of the circadian clock, in the control of flowering time, in freezing- and osmotic-stress tolerance and in both salicylic acid- and jasmonate-mediated defense gene expression. The polypeptide is Mediator of RNA polymerase II transcription subunit 16 (MED16) (Arabidopsis thaliana (Mouse-ear cress)).